We begin with the raw amino-acid sequence, 273 residues long: Large ribosomal subunit protein uL2cz/uL2cy (273 aa).

Disordered regions lie at residues 1–23 (MAIH…SQVK) and 224–273 (NPVD…RRRK). Basic and acidic residues predominate over residues 262 to 273 (KYSDRFILRRRK).

The protein belongs to the universal ribosomal protein uL2 family. As to quaternary structure, part of the 50S ribosomal subunit.

It localises to the plastid. The protein resides in the chloroplast. In Acorus calamus var. americanus (American sweet flag), this protein is Large ribosomal subunit protein uL2cz/uL2cy (rpl2-A).